The primary structure comprises 353 residues: Quinolinate synthase (353 aa).

Residues His47 and Ser68 each contribute to the iminosuccinate site. Cys113 serves as a coordination point for [4Fe-4S] cluster. Residues 139–141 (YAN) and Ser156 contribute to the iminosuccinate site. Residue Cys200 coordinates [4Fe-4S] cluster. Iminosuccinate-binding positions include 226–228 (HPE) and Thr243. Position 297 (Cys297) interacts with [4Fe-4S] cluster.

The protein belongs to the quinolinate synthase family. Type 1 subfamily. It depends on [4Fe-4S] cluster as a cofactor.

It localises to the cytoplasm. It catalyses the reaction iminosuccinate + dihydroxyacetone phosphate = quinolinate + phosphate + 2 H2O + H(+). It functions in the pathway cofactor biosynthesis; NAD(+) biosynthesis; quinolinate from iminoaspartate: step 1/1. In terms of biological role, catalyzes the condensation of iminoaspartate with dihydroxyacetone phosphate to form quinolinate. The chain is Quinolinate synthase from Pectobacterium atrosepticum (strain SCRI 1043 / ATCC BAA-672) (Erwinia carotovora subsp. atroseptica).